A 195-amino-acid polypeptide reads, in one-letter code: Imidazoleglycerol-phosphate dehydratase (195 aa).

This sequence belongs to the imidazoleglycerol-phosphate dehydratase family.

The protein localises to the cytoplasm. It carries out the reaction D-erythro-1-(imidazol-4-yl)glycerol 3-phosphate = 3-(imidazol-4-yl)-2-oxopropyl phosphate + H2O. Its pathway is amino-acid biosynthesis; L-histidine biosynthesis; L-histidine from 5-phospho-alpha-D-ribose 1-diphosphate: step 6/9. This Geobacter sulfurreducens (strain ATCC 51573 / DSM 12127 / PCA) protein is Imidazoleglycerol-phosphate dehydratase.